Here is a 185-residue protein sequence, read N- to C-terminus: Ubiquitin-fold modifier-conjugating enzyme 1 (185 aa).

Cysteine 119 (glycyl thioester intermediate) is an active-site residue.

Belongs to the ubiquitin-conjugating enzyme family. UFC1 subfamily.

Functionally, E2-like enzyme which forms an intermediate with UFM1 via a thioester linkage. The polypeptide is Ubiquitin-fold modifier-conjugating enzyme 1 (Oryza sativa subsp. japonica (Rice)).